The sequence spans 265 residues: Glutamate racemase (265 aa).

Substrate is bound by residues 10–11 and 42–43; these read DS and YG. Cys73 serves as the catalytic Proton donor/acceptor. 74 to 75 lines the substrate pocket; that stretch reads NT. The active-site Proton donor/acceptor is Cys184. 185-186 contacts substrate; that stretch reads TH.

The protein belongs to the aspartate/glutamate racemases family.

The enzyme catalyses L-glutamate = D-glutamate. The protein operates within cell wall biogenesis; peptidoglycan biosynthesis. Provides the (R)-glutamate required for cell wall biosynthesis. This chain is Glutamate racemase, found in Pediococcus pentosaceus (strain ATCC 25745 / CCUG 21536 / LMG 10740 / 183-1w).